We begin with the raw amino-acid sequence, 429 residues long: Chordin-like protein 2 (429 aa).

The first 25 residues, 1 to 25, serve as a signal peptide directing secretion; sequence MVPEVRVLSSLLGLALLWFPLDSHA. 2 VWFC domains span residues 31–96 and 109–175; these read MFCL…PKCV and KSCQ…QACK. Residue N114 is glycosylated (N-linked (GlcNAc...) asparagine). S182 carries the post-translational modification Phosphoserine; by FAM20C. The interval 182-224 is disordered; sequence SDEEDSVQSLHGVRHPQDPCSSDAGRKRGPGTPAPTGLSAPLS. A VWFC 3 domain is found at 250–315; that stretch reads KACVHGGKTY…VAGKCCKICP (66 aa).

Interacts with GDF5. May interact with BMP2, BMP4, BMP5, BMP6, BMP7 and INHBA. Phosphorylated by FAM20C in the extracellular medium. Highly expressed in uterus. Moderately expressed in heart, liver, prostate, testis and ovary. Weakly expressed in skeletal muscle, kidney, spleen, small intestine and colon. Expressed in the secretory epithelial cells of uterine endometrium, fallopian tubes, endocervical glands, bladder and prostate, as well as the transitional epithelium of the urinary bladder, and in bone osteoblasts (at protein level). In normal cartilage, expression was confined in a few chondrocytes in the superficial zone as well as in the middle zone. In diseased cartilage coming from osteoarthritic patients, expression was limited to the middle zone of chondrocytes. Isoform 1 and isoform 2 are expressed in fetal cerebellum and heart, while only isoform 2 is detected in fetal spleen. Isoform 2 present in plasma.

Its subcellular location is the secreted. The protein resides in the cytoplasm. May inhibit BMPs activity by blocking their interaction with their receptors. Has a negative regulator effect on the cartilage formation/regeneration from immature mesenchymal cells, by preventing or reducing the rate of matrix accumulation. Implicated in tumor angiogenesis. May play a role during myoblast and osteoblast differentiation, and maturation. This Homo sapiens (Human) protein is Chordin-like protein 2 (CHRDL2).